The following is a 144-amino-acid chain: 3-hydroxyacyl-[acyl-carrier-protein] dehydratase FabZ (144 aa).

Histidine 51 is a catalytic residue.

The protein belongs to the thioester dehydratase family. FabZ subfamily.

It localises to the cytoplasm. The catalysed reaction is a (3R)-hydroxyacyl-[ACP] = a (2E)-enoyl-[ACP] + H2O. Functionally, involved in unsaturated fatty acids biosynthesis. Catalyzes the dehydration of short chain beta-hydroxyacyl-ACPs and long chain saturated and unsaturated beta-hydroxyacyl-ACPs. This chain is 3-hydroxyacyl-[acyl-carrier-protein] dehydratase FabZ, found in Clostridium botulinum (strain ATCC 19397 / Type A).